Here is a 150-residue protein sequence, read N- to C-terminus: 3-dehydroquinate dehydratase (150 aa).

Tyr26 acts as the Proton acceptor in catalysis. Substrate-binding residues include Asn77, His83, and Asp90. Catalysis depends on His103, which acts as the Proton donor. Substrate contacts are provided by residues 104 to 105 and Arg114; that span reads LS.

The protein belongs to the type-II 3-dehydroquinase family. As to quaternary structure, homododecamer.

The enzyme catalyses 3-dehydroquinate = 3-dehydroshikimate + H2O. The protein operates within metabolic intermediate biosynthesis; chorismate biosynthesis; chorismate from D-erythrose 4-phosphate and phosphoenolpyruvate: step 3/7. Catalyzes a trans-dehydration via an enolate intermediate. This chain is 3-dehydroquinate dehydratase, found in Klebsiella pneumoniae (strain 342).